We begin with the raw amino-acid sequence, 120 residues long: Large ribosomal subunit protein uL18 (120 aa).

Residues 1 to 20 (MKSTRKSATQRRHRRLRRHL) are compositionally biased toward basic residues. The segment at 1 to 26 (MKSTRKSATQRRHRRLRRHLSGTSER) is disordered.

The protein belongs to the universal ribosomal protein uL18 family. As to quaternary structure, part of the 50S ribosomal subunit; part of the 5S rRNA/L5/L18/L25 subcomplex. Contacts the 5S and 23S rRNAs.

Its function is as follows. This is one of the proteins that bind and probably mediate the attachment of the 5S RNA into the large ribosomal subunit, where it forms part of the central protuberance. This is Large ribosomal subunit protein uL18 from Synechocystis sp. (strain ATCC 27184 / PCC 6803 / Kazusa).